Consider the following 96-residue polypeptide: MALTLADVDKIARLSRLHLTAEEKEKSLQELNDIFTMVEQMQTINTDGIEPMAHPHEAALRLREDEVTETDRAAEYQAGAPEVRNRLYIVPQVIEE.

It belongs to the GatC family. In terms of assembly, heterotrimer of A, B and C subunits.

It carries out the reaction L-glutamyl-tRNA(Gln) + L-glutamine + ATP + H2O = L-glutaminyl-tRNA(Gln) + L-glutamate + ADP + phosphate + H(+). The catalysed reaction is L-aspartyl-tRNA(Asn) + L-glutamine + ATP + H2O = L-asparaginyl-tRNA(Asn) + L-glutamate + ADP + phosphate + 2 H(+). Its function is as follows. Allows the formation of correctly charged Asn-tRNA(Asn) or Gln-tRNA(Gln) through the transamidation of misacylated Asp-tRNA(Asn) or Glu-tRNA(Gln) in organisms which lack either or both of asparaginyl-tRNA or glutaminyl-tRNA synthetases. The reaction takes place in the presence of glutamine and ATP through an activated phospho-Asp-tRNA(Asn) or phospho-Glu-tRNA(Gln). The polypeptide is Glutamyl-tRNA(Gln) amidotransferase subunit C (Neisseria meningitidis serogroup B (strain ATCC BAA-335 / MC58)).